The primary structure comprises 163 residues: Nucleotide-binding protein SACE_6882 (163 aa).

Belongs to the YajQ family.

Its function is as follows. Nucleotide-binding protein. This chain is Nucleotide-binding protein SACE_6882, found in Saccharopolyspora erythraea (strain ATCC 11635 / DSM 40517 / JCM 4748 / NBRC 13426 / NCIMB 8594 / NRRL 2338).